The primary structure comprises 197 residues: MIVGLTGGIASGKTLCCNWFAAQGCYIIDADLIAKELVTVGGVVWLQLRAHFGETIFYADGNLNRALLREKMFHNQEIKEKVNQIFHPAVRAEIEKRIHLYPHAFTLLDVPLLFETQLHKICHMVIVVDIPVSLQIARGVCRDGVNSAQMQRIIASQISREKRLSLANFIIDNSNSIAQTYQQCQQIYQQILSLNAA.

The DPCK domain occupies 2–197 (IVGLTGGIAS…YQQILSLNAA (196 aa)). 10 to 15 (ASGKTL) provides a ligand contact to ATP.

It belongs to the CoaE family.

It is found in the cytoplasm. It carries out the reaction 3'-dephospho-CoA + ATP = ADP + CoA + H(+). The protein operates within cofactor biosynthesis; coenzyme A biosynthesis; CoA from (R)-pantothenate: step 5/5. Its function is as follows. Catalyzes the phosphorylation of the 3'-hydroxyl group of dephosphocoenzyme A to form coenzyme A. In Dichelobacter nodosus (Bacteroides nodosus), this protein is Dephospho-CoA kinase.